Reading from the N-terminus, the 392-residue chain is Flagellar P-ring protein (392 aa).

The signal sequence occupies residues 1 to 38 (MKPFARRALLTAEPIRALLLAASLLAATLGLMPAEAFG).

The protein belongs to the FlgI family. As to quaternary structure, the basal body constitutes a major portion of the flagellar organelle and consists of four rings (L,P,S, and M) mounted on a central rod.

It localises to the periplasm. The protein localises to the bacterial flagellum basal body. Its function is as follows. Assembles around the rod to form the L-ring and probably protects the motor/basal body from shearing forces during rotation. The polypeptide is Flagellar P-ring protein (Paramagnetospirillum magneticum (strain ATCC 700264 / AMB-1) (Magnetospirillum magneticum)).